A 364-amino-acid polypeptide reads, in one-letter code: Protein leg1a (364 aa).

Positions Met1–Ala22 are cleaved as a signal peptide. Asn70 is a glycosylation site (N-linked (GlcNAc...) asparagine).

The protein belongs to the LEG1 family. In terms of tissue distribution, detected in all tissues tested, with the highest levels in serum (at protein level). At mRNA level, only expressed in liver.

It is found in the secreted. Its function is as follows. Important for early development of liver, exocrine pancreas and intestine, probably through cell cycle regulation. In liver, its function is partially redundant with leg1b function. This is Protein leg1a from Danio rerio (Zebrafish).